A 523-amino-acid polypeptide reads, in one-letter code: Synaptotagmin-10 (523 aa).

Residues 1–55 (MSFHKEDGVNSLCQKALHIVTELCFAGQVEWEKCSGIFPRDRGSQGGSSTDISVS) are Vesicular-facing. The cysteine motif stretch occupies residues 13 to 35 (CQKALHIVTELCFAGQVEWEKCS). Residues 56–76 (LLAVVVSFCGLALLVVSLFVF) traverse the membrane as a helical segment. Residues 77–523 (WKLCWPCWKS…CPSPKPPSTP (447 aa)) lie on the Cytoplasmic side of the membrane. Residue Thr-136 is modified to Phosphothreonine. 2 C2 domains span residues 231–352 (ICGK…TVWK) and 363–496 (DLGE…THWH). Residues Asp-262, Asp-268, Asp-320, Phe-321, Asp-322, Ser-325, Asp-328, Asp-394, Asp-400, Asp-454, and Asp-456 each contribute to the Ca(2+) site.

This sequence belongs to the synaptotagmin family. Homodimer; disulfide-linked via the cysteine motif. Can also form heterodimers with SYT3, SYT6, SYT7 and SYT9. The cofactor is Ca(2+). Expressed only in pancreas, lung and kidney.

The protein resides in the cytoplasmic vesicle. It is found in the secretory vesicle membrane. Ca(2+) sensor specifically required for the Ca(2+)-dependent exocytosis of secretory vesicles containing IGF1 in neurons of the olfactory bulb. Exocytosis of IGF1 is required for sensory perception of smell. Not involved in Ca(2+)-dependent synaptic vesicle exocytosis. Acts through Ca(2+) and phospholipid binding to the C2 domain: Ca(2+) induces binding of the C2-domains to phospholipid membranes and to assembled SNARE-complexes; both actions contribute to triggering exocytosis. The sequence is that of Synaptotagmin-10 (SYT10) from Homo sapiens (Human).